The sequence spans 379 residues: Galactose-1-phosphate uridylyltransferase (379 aa).

The span at 1–10 shows a compositional bias: basic and acidic residues; it reads MSHSGADPEQ. The tract at residues 1 to 20 is disordered; sequence MSHSGADPEQRQQASEADAM. A Zn(2+)-binding site is contributed by cysteine 75. Residues alanine 81, 97–98, and asparagine 173 contribute to the UDP-alpha-D-glucose site; that span reads ND. Histidine 184 contributes to the Zn(2+) binding site. Histidine 186 serves as the catalytic Tele-UMP-histidine intermediate. Glutamine 188 is a binding site for UDP-alpha-D-glucose. Glutamate 202, histidine 301, histidine 319, and histidine 321 together coordinate Zn(2+). UDP-alpha-D-glucose contacts are provided by residues 334–337 and 339–340; these read KFMV and YE.

This sequence belongs to the galactose-1-phosphate uridylyltransferase type 1 family. Homodimer. Zn(2+) serves as cofactor.

It catalyses the reaction alpha-D-galactose 1-phosphate + UDP-alpha-D-glucose = alpha-D-glucose 1-phosphate + UDP-alpha-D-galactose. Its pathway is carbohydrate metabolism; galactose metabolism. Functionally, plays an important role in galactose metabolism. The chain is Galactose-1-phosphate uridylyltransferase (Galt) from Mus musculus (Mouse).